The primary structure comprises 244 residues: Probable transcriptional regulatory protein XF_1906 (244 aa).

The protein belongs to the TACO1 family.

The protein resides in the cytoplasm. The protein is Probable transcriptional regulatory protein XF_1906 of Xylella fastidiosa (strain 9a5c).